A 576-amino-acid polypeptide reads, in one-letter code: F-actin capping regulator BSP1 (576 aa).

Residues 24–50 (RYSNIPSSKPAGEALSPVRSHNSGEYR) form a disordered region. Phosphoserine is present on residues serine 46, serine 79, and serine 88. Disordered stretches follow at residues 132–160 (NDSNADKNLPSFEKGPRMPSRGRPRPREK) and 173–316 (GRAD…KRIP). Phosphoserine is present on serine 185. Residues 191-206 (TRRDHIKITDGNEEKP) are compositionally biased toward basic and acidic residues. Phosphoserine is present on serine 220. 2 stretches are compositionally biased toward polar residues: residues 243–255 (SRSTKPASFLSSL) and 264–279 (KSYNSEMETPKTTVKS). Over residues 304-313 (KPTPPSPPAK) the composition is skewed to pro residues. 2 positions are modified to phosphoserine: serine 309 and serine 320. The segment at 408–470 (SIPEAIKGIQ…LSLRNNLKKR (63 aa)) is interaction with F-actin. A disordered region spans residues 541–576 (DKYTTSRDETVKETKPLVHPNKNRTRGPRRKLPTRV). Basic and acidic residues predominate over residues 544–556 (TTSRDETVKETKP). Residues 547–576 (RDETVKETKPLVHPNKNRTRGPRRKLPTRV) are interaction with the F-actin capping complex. Over residues 561–576 (NKNRTRGPRRKLPTRV) the composition is skewed to basic residues.

Interacts (via C-terminus) with the CAP1-CAP2 F-actin capping protein complex. Interacts with INP52 (via SAC domain); the interaction is direct. Interacts with INP53 (via SAC domain); the interaction is direct. Interacts with RVS167. Interacts with SLA1. In terms of processing, phosphorylated by CDC28.

It is found in the cytoplasm. Its subcellular location is the cytoskeleton. It localises to the actin patch. The protein resides in the cell membrane. Functionally, recruits the capping protein complex to actin patches and the actomyosin contractile ring, and/or stabilizes their interaction. May serve as an adapter to link INP52 and INP53 to the cortical actin cytoskeleton. Binds F-actin. The sequence is that of F-actin capping regulator BSP1 (BSP1) from Saccharomyces cerevisiae (strain ATCC 204508 / S288c) (Baker's yeast).